A 357-amino-acid chain; its full sequence is Protein-glutamate methylesterase/protein-glutamine glutaminase 1 (357 aa).

In terms of domain architecture, Response regulatory spans 10 to 127 (RTLIVDDSAF…DVNKIEKELV (118 aa)). 4-aspartylphosphate is present on Asp61. Residues 159-353 (SCAGDFAVLI…EEIVRMSEVK (195 aa)) form the CheB-type methylesterase domain. Catalysis depends on residues Ser171, His198, and Asp295.

The protein belongs to the CheB family. Phosphorylated by CheA. Phosphorylation of the N-terminal regulatory domain activates the methylesterase activity.

It is found in the cytoplasm. The enzyme catalyses [protein]-L-glutamate 5-O-methyl ester + H2O = L-glutamyl-[protein] + methanol + H(+). It carries out the reaction L-glutaminyl-[protein] + H2O = L-glutamyl-[protein] + NH4(+). Involved in chemotaxis. Part of a chemotaxis signal transduction system that modulates chemotaxis in response to various stimuli. Catalyzes the demethylation of specific methylglutamate residues introduced into the chemoreceptors (methyl-accepting chemotaxis proteins or MCP) by CheR. Also mediates the irreversible deamidation of specific glutamine residues to glutamic acid. The chain is Protein-glutamate methylesterase/protein-glutamine glutaminase 1 from Methanosarcina mazei (strain ATCC BAA-159 / DSM 3647 / Goe1 / Go1 / JCM 11833 / OCM 88) (Methanosarcina frisia).